Here is a 186-residue protein sequence, read N- to C-terminus: dTTP/UTP pyrophosphatase (186 aa).

Residue Asp67 is the Proton acceptor of the active site.

It belongs to the Maf family. YhdE subfamily. A divalent metal cation is required as a cofactor.

It localises to the cytoplasm. The catalysed reaction is dTTP + H2O = dTMP + diphosphate + H(+). The enzyme catalyses UTP + H2O = UMP + diphosphate + H(+). Functionally, nucleoside triphosphate pyrophosphatase that hydrolyzes dTTP and UTP. May have a dual role in cell division arrest and in preventing the incorporation of modified nucleotides into cellular nucleic acids. The polypeptide is dTTP/UTP pyrophosphatase (Carboxydothermus hydrogenoformans (strain ATCC BAA-161 / DSM 6008 / Z-2901)).